A 1065-amino-acid polypeptide reads, in one-letter code: Probable importin-7 homolog (1065 aa).

The 74-residue stretch at A25–H98 folds into the Importin N-terminal domain. Positions E958–E996 are disordered. Acidic residues predominate over residues L963–E996.

It belongs to the importin beta family.

The protein localises to the cytoplasm. It localises to the nucleus. May function in nuclear protein import. In Dictyostelium discoideum (Social amoeba), this protein is Probable importin-7 homolog.